We begin with the raw amino-acid sequence, 257 residues long: Snake venom serine protease KN9 (257 aa).

An N-terminal signal peptide occupies residues 1–18 (MVLIRVLANLLILQLSYA). Residues 19-24 (QKSSEL) constitute a propeptide that is removed on maturation. The Peptidase S1 domain occupies 25-248 (VVGGDECNIN…HLDWIKSIIA (224 aa)). 5 cysteine pairs are disulfide-bonded: cysteine 31-cysteine 162, cysteine 49-cysteine 65, cysteine 141-cysteine 209, cysteine 173-cysteine 188, and cysteine 199-cysteine 224. Histidine 64 acts as the Charge relay system in catalysis. N-linked (GlcNAc...) asparagine glycosylation occurs at asparagine 102. Aspartate 109 (charge relay system) is an active-site residue. 2 N-linked (GlcNAc...) asparagine glycosylation sites follow: asparagine 120 and asparagine 121. The active-site Charge relay system is serine 203.

This sequence belongs to the peptidase S1 family. Snake venom subfamily. As to quaternary structure, monomer. As to expression, expressed by the venom gland.

The protein localises to the secreted. Functionally, snake venom serine protease that may act in the hemostasis system of the prey. The sequence is that of Snake venom serine protease KN9 from Trimeresurus stejnegeri (Chinese green tree viper).